The primary structure comprises 194 residues: Inosine triphosphate pyrophosphatase (194 aa).

An N-acetylalanine modification is found at Ala2. 14–19 provides a ligand contact to ITP; it reads TGNAKK. Mg(2+) is bound at residue Glu44. ITP-binding positions include Lys56, 72–73, Lys89, 149–152, Lys172, and 177–178; these read DT, FGWD, and HR.

Belongs to the HAM1 NTPase family. Homodimer. Requires Mg(2+) as cofactor. Ubiquitous. Highly expressed in heart, liver, sex glands, thyroid and adrenal gland.

It localises to the cytoplasm. It carries out the reaction ITP + H2O = IMP + diphosphate + H(+). The catalysed reaction is dITP + H2O = dIMP + diphosphate + H(+). It catalyses the reaction XTP + H2O = XMP + diphosphate + H(+). The enzyme catalyses N(6)-hydroxy-dATP + H2O = N(6)-hydroxy-dAMP + diphosphate + H(+). Functionally, pyrophosphatase that hydrolyzes the non-canonical purine nucleotides inosine triphosphate (ITP), deoxyinosine triphosphate (dITP) as well as 2'-deoxy-N-6-hydroxylaminopurine triphosphate (dHAPTP) and xanthosine 5'-triphosphate (XTP) to their respective monophosphate derivatives. The enzyme does not distinguish between the deoxy- and ribose forms. Probably excludes non-canonical purines from RNA and DNA precursor pools, thus preventing their incorporation into RNA and DNA and avoiding chromosomal lesions. The sequence is that of Inosine triphosphate pyrophosphatase from Homo sapiens (Human).